We begin with the raw amino-acid sequence, 319 residues long: MDHHHHIASRNSSTTSELPSFEPACHNGNGNGWIYDPNQVRYDQSSDQRLSKLTDLVGKHWSIAPPNNPDMNHNLHHHFDHDHSQNDDISMYRQALEVKNEEDLCYNNGSSGGGSLFHDPIESSRSFLDIRLSRPLTDINPSFKPCFKALNVSEFNKKEHQTASLAAVRLGTTNAGKKKRCEEISDEVSKKAKCSEGSTLSPEKELPKAKLRDKITTLQQIVSPFGKTDTASVLQEAITYINFYQEQVKLLSTPYMKNSSMKDPWGGWDREDHNKRGPKHLDLRSRGLCLVPISYTPIAYRDNSATDYWNPTYRGSLYR.

The tract at residues 1–23 (MDHHHHIASRNSSTTSELPSFEP) is disordered. The segment covering 9-18 (SRNSSTTSEL) has biased composition (polar residues). One can recognise a bHLH domain in the interval 195–244 (SEGSTLSPEKELPKAKLRDKITTLQQIVSPFGKTDTASVLQEAITYINFY).

As to quaternary structure, homodimer.

It localises to the nucleus. This Arabidopsis thaliana (Mouse-ear cress) protein is Transcription factor bHLH111 (BHLH111).